The sequence spans 256 residues: EF-hand calcium-binding domain-containing protein 4A (256 aa).

Positions 1–10 (MAHLGSRRRM) are enriched in basic residues. Positions 1-32 (MAHLGSRRRMSPGLRTRIAHRKAHRTPPSPLI) are disordered. 2 consecutive EF-hand domains span residues 41-69 (KAHE…QNEL) and 71-106 (LTPE…LLGV). Ca(2+) contacts are provided by Asp84, Ser86, Asn88, Tyr90, and Glu95. Residues 190 to 235 (IRDVHHEKDTLEQALKRKETDHGREVRCLYEEMEQQIKIERERLLK) adopt a coiled-coil conformation.

It belongs to the EFCAB4 family.

The protein is EF-hand calcium-binding domain-containing protein 4A (cracr2b) of Xenopus tropicalis (Western clawed frog).